The sequence spans 645 residues: 1-deoxy-D-xylulose-5-phosphate synthase 1 (645 aa).

The tract at residues 1–20 (MTDTKTPTLDRVAGPADLRS) is disordered. Thiamine diphosphate is bound by residues histidine 78 and 119–121 (AHS). Aspartate 150 contributes to the Mg(2+) binding site. Thiamine diphosphate contacts are provided by residues 151 to 152 (GS), asparagine 179, tyrosine 291, and glutamate 373. Mg(2+) is bound at residue asparagine 179.

Belongs to the transketolase family. DXPS subfamily. In terms of assembly, homodimer. Requires Mg(2+) as cofactor. Thiamine diphosphate serves as cofactor.

The catalysed reaction is D-glyceraldehyde 3-phosphate + pyruvate + H(+) = 1-deoxy-D-xylulose 5-phosphate + CO2. The protein operates within metabolic intermediate biosynthesis; 1-deoxy-D-xylulose 5-phosphate biosynthesis; 1-deoxy-D-xylulose 5-phosphate from D-glyceraldehyde 3-phosphate and pyruvate: step 1/1. Catalyzes the acyloin condensation reaction between C atoms 2 and 3 of pyruvate and glyceraldehyde 3-phosphate to yield 1-deoxy-D-xylulose-5-phosphate (DXP). The sequence is that of 1-deoxy-D-xylulose-5-phosphate synthase 1 from Roseobacter denitrificans (strain ATCC 33942 / OCh 114) (Erythrobacter sp. (strain OCh 114)).